A 413-amino-acid polypeptide reads, in one-letter code: CinA-like protein (413 aa).

It belongs to the CinA family.

The sequence is that of CinA-like protein from Crocosphaera subtropica (strain ATCC 51142 / BH68) (Cyanothece sp. (strain ATCC 51142)).